The chain runs to 236 residues: Large ribosomal subunit protein uL2 (236 aa).

Polar residues predominate over residues 1-10 (MGHRITTQSR). Disordered regions lie at residues 1-20 (MGHRITTQSRGHGGPTYRAP) and 202-236 (GGGGHQHAGRPKTVSRGTSPGRKVGHIAARRTGRR). Over residues 224-236 (KVGHIAARRTGRR) the composition is skewed to basic residues.

The protein belongs to the universal ribosomal protein uL2 family. In terms of assembly, part of the 50S ribosomal subunit. Forms a bridge to the 30S subunit in the 70S ribosome.

Functionally, one of the primary rRNA binding proteins. Required for association of the 30S and 50S subunits to form the 70S ribosome, for tRNA binding and peptide bond formation. It has been suggested to have peptidyltransferase activity; this is somewhat controversial. Makes several contacts with the 16S rRNA in the 70S ribosome. The protein is Large ribosomal subunit protein uL2 of Methanospirillum hungatei JF-1 (strain ATCC 27890 / DSM 864 / NBRC 100397 / JF-1).